The primary structure comprises 251 residues: 2,3-bisphosphoglycerate-dependent phosphoglycerate mutase (251 aa).

Residues 7 to 14 (RHGESEWN), 20 to 21 (TG), R59, 86 to 89 (ERHY), K97, 113 to 114 (RR), and 186 to 187 (GN) each bind substrate. The active-site Tele-phosphohistidine intermediate is H8. E86 serves as the catalytic Proton donor/acceptor.

The protein belongs to the phosphoglycerate mutase family. BPG-dependent PGAM subfamily.

The enzyme catalyses (2R)-2-phosphoglycerate = (2R)-3-phosphoglycerate. It participates in carbohydrate degradation; glycolysis; pyruvate from D-glyceraldehyde 3-phosphate: step 3/5. In terms of biological role, catalyzes the interconversion of 2-phosphoglycerate and 3-phosphoglycerate. This is 2,3-bisphosphoglycerate-dependent phosphoglycerate mutase from Treponema pallidum (strain Nichols).